The following is a 134-amino-acid chain: Probable glycine cleavage system H protein (134 aa).

Positions 29–110 constitute a Lipoyl-binding domain; it reads TVLVGITDYA…PYGAWIAKIK (82 aa). Residue lysine 70 is modified to N6-lipoyllysine.

It belongs to the GcvH family. The glycine cleavage system is composed of four proteins: P, T, L and H. It depends on (R)-lipoate as a cofactor.

The glycine cleavage system catalyzes the degradation of glycine. The H protein shuttles the methylamine group of glycine from the P protein to the T protein. This chain is Probable glycine cleavage system H protein, found in Pyrococcus abyssi (strain GE5 / Orsay).